The following is a 437-amino-acid chain: Xylose isomerase (437 aa).

Catalysis depends on residues H101 and D104. E232, E268, H271, D296, D307, D309, and D339 together coordinate Mg(2+).

Belongs to the xylose isomerase family. In terms of assembly, homotetramer. The cofactor is Mg(2+).

It localises to the cytoplasm. The catalysed reaction is alpha-D-xylose = alpha-D-xylulofuranose. This chain is Xylose isomerase, found in Mannheimia succiniciproducens (strain KCTC 0769BP / MBEL55E).